Reading from the N-terminus, the 541-residue chain is Zinc finger protein 513 (541 aa).

Positions 1-118 (MPRRKQSHPQ…GEARGERPGP (118 aa)) are disordered. Positions 44 to 57 (LEFEEEEEEEEGDG) are enriched in acidic residues. A phosphoserine mark is found at Ser85 and Ser96. Over residues 103-115 (EPARGPGEARGER) the composition is skewed to basic and acidic residues. 8 consecutive C2H2-type zinc fingers follow at residues 150–172 (YSCRLCTFVSHYSSHLKRHMQTH), 178–200 (FRCGRCPYASAQLVNLTRHTRTH), 206–228 (YRCPHCPFACSSLGNLRRHQRTH), 360–382 (FACSLCPFATHYPNHLARHMKTH), 388–410 (FRCARCPYASAHLDNLKRHQRVH), 416–438 (YKCPLCPYACGNLANLKRHGRIH), 444–466 (FRCSLCNYSCNQSMNLKRHMLRH), and 472–494 (FRCATCAYTTGHWDNYKRHQKVH). Positions 492-541 (KVHGHGGAGGPGLSASEGWAPPHSPPSVLSSRGPPALGTAGSRAVHTDSS) are disordered.

Belongs to the krueppel C2H2-type zinc-finger protein family. Binds DNA. Can associate with the proximal promoter regions of PAX6 and SP4, and their known targets including ARR3, RHO, OPN1MW2 and OPN1SW. In the retina, expressed in the outer and inner nuclear layers, and the ganglion cell layer.

The protein localises to the nucleus. Transcriptional regulator that plays a role in retinal development and maintenance. This Homo sapiens (Human) protein is Zinc finger protein 513 (ZNF513).